Reading from the N-terminus, the 237-residue chain is Chloride intracellular channel protein 3 (237 aa).

Residues 1–89 (MAETTKLQLF…EEFLEETLGP (89 aa)) are required for insertion into the membrane. Residues 13–91 (ASEDGESVGH…FLEETLGPPD (79 aa)) form the GST N-terminal domain. Residues 23-26 (CPSC) carry the G-site motif. Cys23 and Cys26 form a disulfide bridge. A helical transmembrane segment spans residues 25-45 (SCQRLFMVLLLKGVPFTLTTV). A GST C-terminal domain is found at 69-236 (DGDVKTDTLQ…LAAYQPAVHP (168 aa)). Ser160 carries the phosphoserine modification.

The protein belongs to the chloride channel CLIC family. Associated with the C-terminal of MAPK15.

It is found in the nucleus. The protein localises to the membrane. It localises to the cell membrane. Its subcellular location is the cytoplasm. The protein resides in the secreted. It is found in the extracellular space. The protein localises to the extracellular matrix. It catalyses the reaction chloride(in) = chloride(out). Its function is as follows. In the soluble state, catalyzes glutaredoxin-like thiol disulfide exchange reactions with reduced glutathione as electron donor. Reduced in a glutathione-dependent way and secreted into the extracellular matrix where it activates TGM2 and promotes blood vessel growth during tissue remodeling as occurs in tumorigenesis. Can reduce specific cysteines in TGM2 and regulate cofactor binding. Can insert into membranes and form outwardly rectifying chloride ion channels. May participate in cellular growth control. The chain is Chloride intracellular channel protein 3 from Mus musculus (Mouse).